A 419-amino-acid chain; its full sequence is MDKLAIQASPPLAGDVIISGAKNAALPILMAGVLAETDFIVSNVPNLRDVSTSCKLLRCLGAEVDELGNGQIRISTKNLNEFCAPYDLVKTMRASILILGPLLARYGTADVSLPGGCAIGARPVNLHLHGLEMMGAKIEVKEGYIKARVDGRLKGAHIFMDMVSVGATENLLMAAALADGETVIENAAREPEVIDLANCLIAMGAKITGVGSATLRIQGVERLQGCEYRVMPDRIETGSFLVAAAVTRGRIRCLKADPASLESVIAKLEDAGAKITTGEDWIELDMEGKRPKAVNIKTAPYPGFPTDMQAQFCVLNVLAQGTATITETIFENRFMHVPELIRMGANMELEGNTCIIQGIESLSGAQVMATDLRASASLVIAGLVADGKTIVDRIYHLDRGYEHIEQKFQGLGAHVERVQ.

22 to 23 serves as a coordination point for phosphoenolpyruvate; it reads KN. Arg-93 contributes to the UDP-N-acetyl-alpha-D-glucosamine binding site. Cys-117 (proton donor) is an active-site residue. Cys-117 bears the 2-(S-cysteinyl)pyruvic acid O-phosphothioketal mark. Asp-307 and Ile-329 together coordinate UDP-N-acetyl-alpha-D-glucosamine.

It belongs to the EPSP synthase family. MurA subfamily.

It localises to the cytoplasm. It catalyses the reaction phosphoenolpyruvate + UDP-N-acetyl-alpha-D-glucosamine = UDP-N-acetyl-3-O-(1-carboxyvinyl)-alpha-D-glucosamine + phosphate. It participates in cell wall biogenesis; peptidoglycan biosynthesis. Cell wall formation. Adds enolpyruvyl to UDP-N-acetylglucosamine. In Shewanella sp. (strain MR-7), this protein is UDP-N-acetylglucosamine 1-carboxyvinyltransferase.